The chain runs to 334 residues: Phosphate acyltransferase (334 aa).

It belongs to the PlsX family. In terms of assembly, homodimer. Probably interacts with PlsY.

It is found in the cytoplasm. It catalyses the reaction a fatty acyl-[ACP] + phosphate = an acyl phosphate + holo-[ACP]. It participates in lipid metabolism; phospholipid metabolism. Functionally, catalyzes the reversible formation of acyl-phosphate (acyl-PO(4)) from acyl-[acyl-carrier-protein] (acyl-ACP). This enzyme utilizes acyl-ACP as fatty acyl donor, but not acyl-CoA. This Halothermothrix orenii (strain H 168 / OCM 544 / DSM 9562) protein is Phosphate acyltransferase.